A 121-amino-acid chain; its full sequence is MTTSSPTATTAQAHGRFIRGSVSKVRRVLDQIRGRTYRDALIMLEFMPYRSTGPITKVLRSAVANAEHNLGLDPSTLVISQASADMGPSMKRYRPRAQGRAYAIKKQTCHISIAVASQTDS.

Belongs to the universal ribosomal protein uL22 family. As to quaternary structure, part of the 50S ribosomal subunit.

Functionally, this protein binds specifically to 23S rRNA; its binding is stimulated by other ribosomal proteins, e.g. L4, L17, and L20. It is important during the early stages of 50S assembly. It makes multiple contacts with different domains of the 23S rRNA in the assembled 50S subunit and ribosome. The globular domain of the protein is located near the polypeptide exit tunnel on the outside of the subunit, while an extended beta-hairpin is found that lines the wall of the exit tunnel in the center of the 70S ribosome. The polypeptide is Large ribosomal subunit protein uL22 (Synechococcus sp. (strain WH7803)).